The chain runs to 509 residues: Anaerobic nitric oxide reductase transcription regulator NorR (509 aa).

A 4-aspartylphosphate modification is found at D56. Residues 186–415 (MIGRSPAMDR…LEHAIHRAAV (230 aa)) enclose the Sigma-54 factor interaction domain. ATP contacts are provided by residues 214–221 (GETGVGKE) and 277–286 (ADKGTLFLDE). A DNA-binding region (H-T-H motif) is located at residues 484–503 (WAATARALEMDGGNLHRLAR).

Its pathway is nitrogen metabolism; nitric oxide reduction. In terms of biological role, required for the expression of anaerobic nitric oxide (NO) reductase, acts as a transcriptional activator for at least the norVW operon. Activation also requires sigma-54. The polypeptide is Anaerobic nitric oxide reductase transcription regulator NorR (Aeromonas salmonicida (strain A449)).